The chain runs to 414 residues: Esterase FrsA (414 aa).

Belongs to the FrsA family.

The catalysed reaction is a carboxylic ester + H2O = an alcohol + a carboxylate + H(+). In terms of biological role, catalyzes the hydrolysis of esters. This Escherichia coli O157:H7 protein is Esterase FrsA.